The sequence spans 663 residues: LEAF RUST 10 DISEASE-RESISTANCE LOCUS RECEPTOR-LIKE PROTEIN KINASE-like 1.4 (663 aa).

Residues Met-1–Ser-25 form the signal peptide. Residues Ser-26 to Gly-241 lie on the Extracellular side of the membrane. 5 N-linked (GlcNAc...) asparagine glycosylation sites follow: Asn-36, Asn-64, Asn-106, Asn-137, and Asn-208. Residues Ile-242–Ile-262 form a helical membrane-spanning segment. At Arg-263–Leu-663 the chain is on the cytoplasmic side. Residues Ser-282–Ser-304 are disordered. Low complexity predominate over residues Arg-290 to Ser-304. The Protein kinase domain occupies Glu-334–Ile-609. Residues Leu-340–Val-348 and Lys-362 contribute to the ATP site. Asp-458 acts as the Proton acceptor in catalysis. The segment at Leu-637–Leu-663 is disordered. A compositionally biased stretch (polar residues) spans Trp-653–Leu-663.

Belongs to the protein kinase superfamily. Ser/Thr protein kinase family.

It localises to the cell membrane. The catalysed reaction is L-seryl-[protein] + ATP = O-phospho-L-seryl-[protein] + ADP + H(+). It catalyses the reaction L-threonyl-[protein] + ATP = O-phospho-L-threonyl-[protein] + ADP + H(+). This Arabidopsis thaliana (Mouse-ear cress) protein is LEAF RUST 10 DISEASE-RESISTANCE LOCUS RECEPTOR-LIKE PROTEIN KINASE-like 1.4.